Reading from the N-terminus, the 256-residue chain is tRNA pseudouridine synthase A (256 aa).

Aspartate 55 functions as the Nucleophile in the catalytic mechanism. Substrate is bound at residue tyrosine 113.

Belongs to the tRNA pseudouridine synthase TruA family. In terms of assembly, homodimer.

The catalysed reaction is uridine(38/39/40) in tRNA = pseudouridine(38/39/40) in tRNA. Its function is as follows. Formation of pseudouridine at positions 38, 39 and 40 in the anticodon stem and loop of transfer RNAs. The chain is tRNA pseudouridine synthase A from Limosilactobacillus reuteri (strain DSM 20016) (Lactobacillus reuteri).